The following is a 609-amino-acid chain: Arginine--tRNA ligase (609 aa).

The 'HIGH' region motif lies at 132-142; sequence ANPTSSLHVGH.

This sequence belongs to the class-I aminoacyl-tRNA synthetase family. As to quaternary structure, monomer.

It localises to the cytoplasm. It carries out the reaction tRNA(Arg) + L-arginine + ATP = L-arginyl-tRNA(Arg) + AMP + diphosphate. The polypeptide is Arginine--tRNA ligase (Psychrobacter sp. (strain PRwf-1)).